A 453-amino-acid chain; its full sequence is Bifunctional protein GlmU (453 aa).

A pyrophosphorylase region spans residues 1–226 (MVAVAILAAG…YLEITGINDR (226 aa)). Residues 7-10 (LAAG), Lys-21, Gln-73, and 78-79 (GT) each bind UDP-N-acetyl-alpha-D-glucosamine. Residue Asp-103 participates in Mg(2+) binding. Residues Gly-140, Glu-155, Asn-170, and Asn-224 each coordinate UDP-N-acetyl-alpha-D-glucosamine. Asn-224 serves as a coordination point for Mg(2+). The linker stretch occupies residues 227–247 (KQLAMANGILQNRVKDHWMAQ). Residues 248-453 (GVTLIDPDSI…EWKKTIESKK (206 aa)) are N-acetyltransferase. Residues Arg-329 and Lys-347 each coordinate UDP-N-acetyl-alpha-D-glucosamine. His-359 acts as the Proton acceptor in catalysis. 2 residues coordinate UDP-N-acetyl-alpha-D-glucosamine: Tyr-362 and Asn-373. Acetyl-CoA-binding positions include Ala-376, 382–383 (NY), Ala-419, and Arg-436.

This sequence in the N-terminal section; belongs to the N-acetylglucosamine-1-phosphate uridyltransferase family. It in the C-terminal section; belongs to the transferase hexapeptide repeat family. As to quaternary structure, homotrimer. Requires Mg(2+) as cofactor.

The protein localises to the cytoplasm. The enzyme catalyses alpha-D-glucosamine 1-phosphate + acetyl-CoA = N-acetyl-alpha-D-glucosamine 1-phosphate + CoA + H(+). It carries out the reaction N-acetyl-alpha-D-glucosamine 1-phosphate + UTP + H(+) = UDP-N-acetyl-alpha-D-glucosamine + diphosphate. Its pathway is nucleotide-sugar biosynthesis; UDP-N-acetyl-alpha-D-glucosamine biosynthesis; N-acetyl-alpha-D-glucosamine 1-phosphate from alpha-D-glucosamine 6-phosphate (route II): step 2/2. It functions in the pathway nucleotide-sugar biosynthesis; UDP-N-acetyl-alpha-D-glucosamine biosynthesis; UDP-N-acetyl-alpha-D-glucosamine from N-acetyl-alpha-D-glucosamine 1-phosphate: step 1/1. It participates in bacterial outer membrane biogenesis; LPS lipid A biosynthesis. In terms of biological role, catalyzes the last two sequential reactions in the de novo biosynthetic pathway for UDP-N-acetylglucosamine (UDP-GlcNAc). The C-terminal domain catalyzes the transfer of acetyl group from acetyl coenzyme A to glucosamine-1-phosphate (GlcN-1-P) to produce N-acetylglucosamine-1-phosphate (GlcNAc-1-P), which is converted into UDP-GlcNAc by the transfer of uridine 5-monophosphate (from uridine 5-triphosphate), a reaction catalyzed by the N-terminal domain. The protein is Bifunctional protein GlmU of Rippkaea orientalis (strain PCC 8801 / RF-1) (Cyanothece sp. (strain PCC 8801)).